Consider the following 124-residue polypeptide: Ribosome-binding factor A (124 aa).

Belongs to the RbfA family. As to quaternary structure, monomer. Binds 30S ribosomal subunits, but not 50S ribosomal subunits or 70S ribosomes.

It is found in the cytoplasm. Functionally, one of several proteins that assist in the late maturation steps of the functional core of the 30S ribosomal subunit. Associates with free 30S ribosomal subunits (but not with 30S subunits that are part of 70S ribosomes or polysomes). Required for efficient processing of 16S rRNA. May interact with the 5'-terminal helix region of 16S rRNA. This is Ribosome-binding factor A from Sorangium cellulosum (strain So ce56) (Polyangium cellulosum (strain So ce56)).